The sequence spans 394 residues: Candidapepsin (394 aa).

The N-terminal stretch at 1–23 (MATIFLFTKNVFIALAFALFAQG) is a signal peptide. A propeptide spans 24–60 (LTIPDGIEKRTDKVVSLDFTVIRKPFNATAHRLIQKR) (activation peptide). The N-linked (GlcNAc...) asparagine glycan is linked to Asn50. Residues 74–381 (YAADIVVGSN…DLDDKTISLA (308 aa)) enclose the Peptidase A1 domain. Residue Asp92 is part of the active site. Cys107 and Cys119 are joined by a disulfide. The active site involves Asp278. A disulfide bridge connects residues Cys314 and Cys347.

Belongs to the peptidase A1 family. O-glycosylated.

The protein resides in the secreted. It carries out the reaction Preferential cleavage at the carboxyl of hydrophobic amino acids, but fails to cleave 15-Leu-|-Tyr-16, 16-Tyr-|-Leu-17 and 24-Phe-|-Phe-25 of insulin B chain. Activates trypsinogen, and degrades keratin.. This chain is Candidapepsin (SAPT1), found in Candida tropicalis (Yeast).